Reading from the N-terminus, the 63-residue chain is Cytotoxin homolog S3C2 (63 aa).

4 disulfide bridges follow: Cys3–Cys22, Cys15–Cys40, Cys44–Cys55, and Cys56–Cys61.

The protein belongs to the three-finger toxin family. Short-chain subfamily. Orphan group XVI sub-subfamily. In terms of tissue distribution, expressed by the venom gland.

Its subcellular location is the secreted. The protein is Cytotoxin homolog S3C2 of Aspidelaps scutatus (Shield-nose snake).